Consider the following 232-residue polypeptide: 2-C-methyl-D-erythritol 4-phosphate cytidylyltransferase (232 aa).

Belongs to the IspD/TarI cytidylyltransferase family. IspD subfamily.

It catalyses the reaction 2-C-methyl-D-erythritol 4-phosphate + CTP + H(+) = 4-CDP-2-C-methyl-D-erythritol + diphosphate. The protein operates within isoprenoid biosynthesis; isopentenyl diphosphate biosynthesis via DXP pathway; isopentenyl diphosphate from 1-deoxy-D-xylulose 5-phosphate: step 2/6. Catalyzes the formation of 4-diphosphocytidyl-2-C-methyl-D-erythritol from CTP and 2-C-methyl-D-erythritol 4-phosphate (MEP). This chain is 2-C-methyl-D-erythritol 4-phosphate cytidylyltransferase, found in Synechococcus elongatus (strain ATCC 33912 / PCC 7942 / FACHB-805) (Anacystis nidulans R2).